The following is a 635-amino-acid chain: Ankyrin repeat and SOCS box protein 2 (635 aa).

Positions 8–16 (RGSQCTIGQ) are required for FLNA degradation. The UIM domain maps to 26 to 45 (SEDELVQMAIEQSLADKTRG). ANK repeat units lie at residues 104 to 133 (APAD…NLAE), 137 to 167 (EGWL…TIDQ), 171 to 200 (QEET…EPDI), 204 to 233 (SRET…DTNH), 237 to 266 (RGWT…KVES), 270 to 299 (YGIT…DINT), 303 to 332 (DNAS…DANK), 336 to 365 (DGLL…RTRI), 368 to 397 (SGVS…DVNT), 410 to 439 (RRSS…DPNR), 440 to 469 (DVIS…NIDA), and 476 to 504 (TAFP…DGEP). At Ser371 the chain carries Phosphoserine; by MAPK. The SOCS box domain maps to 586–635 (IKEKAEPPRPLAHLCRLRVRKAIGKYRIKLLDTLPLPGRLIRYLKYENTQ).

Belongs to the ankyrin SOCS box (ASB) family. As to quaternary structure, component of a probable ECS E3 ubiquitin-protein ligase complex which contains CUL5, either RBX1 or RNF7/RBX2, Elongin BC complex (ELOB and ELOC) and ASB2. Interacts with SKP2. Through its interaction with SKP2, likely to bridge the formation of dimeric E3-ubiquitin-protein ligase complexes composed of an ECS complex and an SCF(SKP2) complex. Interacts with JAK2; the interaction targets JAK2 for Notch-mediated proteasomal degradation. Interacts with TCF3/E2A; the interaction is mediated by SKP2 and targets TCF3 for Notch-mediated proteasomal degradation. Interacts with DES. In terms of processing, monoubiquitinated. Post-translationally, not monoubiquitinated. Phosphorylation at Ser-371 is required for association with FLNA and subsequent FLNA degradation. As to expression, expressed in muscle cells. Expressed in hematopoietic cells.

It is found in the cytoplasm. The protein localises to the cytoskeleton. It localises to the stress fiber. The protein resides in the myofibril. Its subcellular location is the sarcomere. It is found in the z line. The protein operates within protein modification; protein ubiquitination. Substrate-recognition component of a SCF-like ECS (Elongin-Cullin-SOCS-box protein) E3 ubiquitin-protein ligase complex which mediates the ubiquitination and subsequent proteasomal degradation of target proteins. Mediates Notch-induced ubiquitination and degradation of substrates including TCF3/E2A and JAK2. Required during embryonic heart development for complete heart looping. Required for cardiomyocyte differentiation. Specifically promotes the ubiquitination of SMAD9 and targets it for proteasomal degradation, leading to avoid excessive accumulation of SMAD9. Plays a role in the regulation of NK-cell migration by modulating protein levels of filamin A/FLNA via regulation of its ubiquitination and proteasome degradation. In terms of biological role, involved in myogenic differentiation and targets filamin FLNB for proteasomal degradation but not filamin FLNA. Also targets DES for proteasomal degradation. Acts as a negative regulator of skeletal muscle mass. Its function is as follows. Targets filamins FLNA and FLNB for proteasomal degradation. This leads to enhanced adhesion of hematopoietic cells to fibronectin. Required for FLNA degradation in immature cardiomyocytes which is necessary for actin cytoskeleton remodeling, leading to proper organization of myofibrils and function of mature cardiomyocytes. Required for degradation of FLNA and FLNB in immature dendritic cells (DC) which enhances immature DC migration by promoting DC podosome formation and DC-mediated degradation of the extracellular matrix. Does not promote proteasomal degradation of tyrosine-protein kinases JAK1 or JAK2 in hematopoietic cells. The chain is Ankyrin repeat and SOCS box protein 2 (ASB2) from Homo sapiens (Human).